Reading from the N-terminus, the 209-residue chain is Putative thymidylate synthase (209 aa).

Cysteine 137 is a catalytic residue.

Belongs to the thymidylate synthase family. Archaeal-type ThyA subfamily. In terms of assembly, monomer.

Its subcellular location is the cytoplasm. Its pathway is pyrimidine metabolism; dTTP biosynthesis. Functionally, may catalyze the biosynthesis of dTMP using an unknown cosubstrate. This chain is Putative thymidylate synthase, found in Methanopyrus kandleri (strain AV19 / DSM 6324 / JCM 9639 / NBRC 100938).